Consider the following 247-residue polypeptide: Uridylate kinase (247 aa).

14–17 (KLSG) provides a ligand contact to ATP. Positions 22–27 (GERGVG) are involved in allosteric activation by GTP. Gly56 lines the UMP pocket. ATP is bound by residues Gly57 and Arg61. UMP-binding positions include Asp76 and 137-144 (IGSPYFST). Residues Asn165, Tyr171, and Asp174 each coordinate ATP.

It belongs to the UMP kinase family. Homohexamer.

It is found in the cytoplasm. It catalyses the reaction UMP + ATP = UDP + ADP. The protein operates within pyrimidine metabolism; CTP biosynthesis via de novo pathway; UDP from UMP (UMPK route): step 1/1. With respect to regulation, allosterically activated by GTP. Inhibited by UTP, 5-bromo-UTP and 5-iodo-UTP. Catalyzes the reversible phosphorylation of UMP to UDP, with ATP as the most efficient phosphate donor. The chain is Uridylate kinase (pyrH) from Streptococcus pneumoniae serotype 4 (strain ATCC BAA-334 / TIGR4).